A 102-amino-acid polypeptide reads, in one-letter code: Co-chaperonin GroES (102 aa).

The protein belongs to the GroES chaperonin family. Heptamer of 7 subunits arranged in a ring. Interacts with the chaperonin GroEL.

It is found in the cytoplasm. Together with the chaperonin GroEL, plays an essential role in assisting protein folding. The GroEL-GroES system forms a nano-cage that allows encapsulation of the non-native substrate proteins and provides a physical environment optimized to promote and accelerate protein folding. GroES binds to the apical surface of the GroEL ring, thereby capping the opening of the GroEL channel. The protein is Co-chaperonin GroES of Chlamydia caviae (strain ATCC VR-813 / DSM 19441 / 03DC25 / GPIC) (Chlamydophila caviae).